A 457-amino-acid chain; its full sequence is Argininosuccinate lyase (457 aa).

This sequence belongs to the lyase 1 family. Argininosuccinate lyase subfamily.

Its subcellular location is the cytoplasm. The enzyme catalyses 2-(N(omega)-L-arginino)succinate = fumarate + L-arginine. Its pathway is amino-acid biosynthesis; L-arginine biosynthesis; L-arginine from L-ornithine and carbamoyl phosphate: step 3/3. The chain is Argininosuccinate lyase from Escherichia coli O157:H7.